The chain runs to 256 residues: Hydroxyacylglutathione hydrolase (256 aa).

Zn(2+)-binding residues include His57, His59, Asp61, His62, His115, Asp134, and His172.

It belongs to the metallo-beta-lactamase superfamily. Glyoxalase II family. In terms of assembly, monomer. It depends on Zn(2+) as a cofactor.

It carries out the reaction an S-(2-hydroxyacyl)glutathione + H2O = a 2-hydroxy carboxylate + glutathione + H(+). It participates in secondary metabolite metabolism; methylglyoxal degradation; (R)-lactate from methylglyoxal: step 2/2. Functionally, thiolesterase that catalyzes the hydrolysis of S-D-lactoyl-glutathione to form glutathione and D-lactic acid. The polypeptide is Hydroxyacylglutathione hydrolase (Maricaulis maris (strain MCS10) (Caulobacter maris)).